The chain runs to 208 residues: Small ribosomal subunit protein uS4 (208 aa).

Residues 98 to 164 form the S4 RNA-binding domain; sequence SRLDNVVYRM…DRIKFALELA (67 aa).

It belongs to the universal ribosomal protein uS4 family. As to quaternary structure, part of the 30S ribosomal subunit. Contacts protein S5. The interaction surface between S4 and S5 is involved in control of translational fidelity.

One of the primary rRNA binding proteins, it binds directly to 16S rRNA where it nucleates assembly of the body of the 30S subunit. Its function is as follows. With S5 and S12 plays an important role in translational accuracy. The chain is Small ribosomal subunit protein uS4 from Nitrosococcus oceani (strain ATCC 19707 / BCRC 17464 / JCM 30415 / NCIMB 11848 / C-107).